Reading from the N-terminus, the 113-residue chain is Mediator of RNA polymerase II transcription subunit 11 (113 aa).

The protein belongs to the Mediator complex subunit 11 family. Component of the Mediator complex.

The protein localises to the nucleus. Its function is as follows. Component of the Mediator complex, a coactivator involved in the regulated transcription of nearly all RNA polymerase II-dependent genes. Mediator functions as a bridge to convey information from gene-specific regulatory proteins to the basal RNA polymerase II transcription machinery. Mediator is recruited to promoters by direct interactions with regulatory proteins and serves as a scaffold for the assembly of a functional pre-initiation complex with RNA polymerase II and the general transcription factors. The chain is Mediator of RNA polymerase II transcription subunit 11 (MED11) from Eremothecium gossypii (strain ATCC 10895 / CBS 109.51 / FGSC 9923 / NRRL Y-1056) (Yeast).